Reading from the N-terminus, the 458-residue chain is UDP-N-acetylmuramoylalanine--D-glutamate ligase (458 aa).

Position 124–130 (Gly-124–Thr-130) interacts with ATP.

It belongs to the MurCDEF family.

The protein resides in the cytoplasm. It carries out the reaction UDP-N-acetyl-alpha-D-muramoyl-L-alanine + D-glutamate + ATP = UDP-N-acetyl-alpha-D-muramoyl-L-alanyl-D-glutamate + ADP + phosphate + H(+). It functions in the pathway cell wall biogenesis; peptidoglycan biosynthesis. In terms of biological role, cell wall formation. Catalyzes the addition of glutamate to the nucleotide precursor UDP-N-acetylmuramoyl-L-alanine (UMA). This is UDP-N-acetylmuramoylalanine--D-glutamate ligase from Clostridium botulinum (strain 657 / Type Ba4).